We begin with the raw amino-acid sequence, 503 residues long: N-fatty-acyl-amino acid synthase/hydrolase PM20D1 (503 aa).

A signal peptide spans 1 to 24 (MAELLASLPAWAAVLLLFFATVSG). Residue Asn-72 is glycosylated (N-linked (GlcNAc...) asparagine). His-125 provides a ligand contact to Zn(2+). Residue Asp-127 is part of the active site. Residue Asp-157 participates in Zn(2+) binding. The active-site Proton acceptor is the Glu-191. Residues Glu-192 and Asp-218 each contribute to the Zn(2+) site. Asn-443 carries an N-linked (GlcNAc...) asparagine glycan. His-465 serves as a coordination point for Zn(2+).

Belongs to the peptidase M20A family. Zn(2+) serves as cofactor. In addition to being detected in blood (at protein level), PM20D1 is also highly expressed in other tissues including brown adipocytes, liver and kidney. It is also expressed in small intestine, large intestine, heart and pancreas.

The protein resides in the secreted. It carries out the reaction an N-acyl-L-amino acid + H2O = an L-alpha-amino acid + a carboxylate. The enzyme catalyses an N-acyl-aromatic L-alpha-amino acid + H2O = an aromatic L-alpha-amino acid + a carboxylate. The catalysed reaction is N-(5Z,8Z,11Z,14Z)-eicosatetraenoyl-glycine + H2O = (5Z,8Z,11Z,14Z)-eicosatetraenoate + glycine. It catalyses the reaction N-hexadecanoyl-L-phenylalanine + H2O = hexadecanoate + L-phenylalanine. It carries out the reaction N-octadecanoyl-L-phenylalanine + H2O = octadecanoate + L-phenylalanine. The enzyme catalyses N-(4Z,7Z,10Z,13Z,16Z,19Z-docosahexaenoyl)-L-phenylalanine + H2O = (4Z,7Z,10Z,13Z,16Z,19Z)-docosahexaenoate + L-phenylalanine. The catalysed reaction is N-(9Z-octadecenoyl)-L-asparagine + H2O = L-asparagine + (9Z)-octadecenoate. It catalyses the reaction (9Z)-octadecenoate + glycine = N-(9Z-octadecenoyl)glycine + H2O. It carries out the reaction N-(9Z-octadecenoyl)-L-lysine + H2O = L-lysine + (9Z)-octadecenoate. The enzyme catalyses N-(9Z-octadecenoyl)-L-methionine + H2O = (9Z)-octadecenoate + L-methionine. The catalysed reaction is N-(9Z-octadecenoyl)-L-serine + H2O = L-serine + (9Z)-octadecenoate. It catalyses the reaction N-(9Z-octadecenoyl)-L-tryptophan + H2O = L-tryptophan + (9Z)-octadecenoate. It carries out the reaction N-(9Z-octadecenoyl)-L-tyrosine + H2O = L-tyrosine + (9Z)-octadecenoate. The enzyme catalyses N-(9Z-octadecenoyl)-L-glutamine + H2O = L-glutamine + (9Z)-octadecenoate. The catalysed reaction is N-(5Z,8Z,11Z,14Z-eicosatetraenoyl)-L-serine + H2O = (5Z,8Z,11Z,14Z)-eicosatetraenoate + L-serine. It catalyses the reaction (5Z,8Z,11Z,14Z)-eicosatetraenoate + L-phenylalanine = N-(5Z,8Z,11Z,14Z-eicosatetraenoyl)-L-phenylalanine + H2O. It carries out the reaction N-(9Z-octadecenoyl)-L-leucine + H2O = L-leucine + (9Z)-octadecenoate. The enzyme catalyses L-phenylalanine + (9Z)-octadecenoate = N-(9Z-octadecenoyl)-L-phenylalanine + H2O. Its pathway is amino-acid metabolism. It participates in energy metabolism; electron transfer. It functions in the pathway lipid metabolism; fatty acid metabolism. Lipoproteins are powerful coactivators of PM20D1 activity in vitro and NAA biosynthesis in vivo. In terms of biological role, secreted enzyme that regulates the endogenous N-fatty acyl amino acid (NAAs) tissue and circulating levels by functioning as a bidirectional NAA synthase/hydrolase. It condenses free fatty acids and free amino acids to generate NAAs and bidirectionally catalyzes the reverse hydrolysis reaction. Some of these NAAs stimulate oxidative metabolism via mitochondrial uncoupling, increasing energy expenditure in a UPC1-independent manner. Thereby, this secreted protein may indirectly regulate whole body energy expenditure. PM20D1 circulates in tight association with both low- and high-density (LDL and HDL,respectively) lipoprotein particles. In Mus musculus (Mouse), this protein is N-fatty-acyl-amino acid synthase/hydrolase PM20D1.